Reading from the N-terminus, the 484-residue chain is Probable chitinase 2 (484 aa).

The first 33 residues, 1–33 (MTLRSRLSGEAPQLWLLLLLASTASSLWASVAA), serve as a signal peptide directing secretion. Residues 41 to 432 (KVVVCYVSTW…RTINEATMLA (392 aa)) form the GH18 domain. Residues cysteine 45 and cysteine 70 are joined by a disulfide bond. Chitin-binding positions include 98-99 (EE) and 125-128 (GGWN). The active-site Proton donor is the glutamate 168. Chitin-binding positions include tyrosine 169, 231–234 (MCYD), and tryptophan 384. Serine 467 is modified (phosphoserine).

This sequence belongs to the glycosyl hydrolase 18 family. Chitinase class II subfamily.

It carries out the reaction Random endo-hydrolysis of N-acetyl-beta-D-glucosaminide (1-&gt;4)-beta-linkages in chitin and chitodextrins.. The protein is Probable chitinase 2 of Drosophila melanogaster (Fruit fly).